We begin with the raw amino-acid sequence, 165 residues long: Nucleotide-binding protein PMM0481 (165 aa).

The protein belongs to the YajQ family.

Nucleotide-binding protein. The chain is Nucleotide-binding protein PMM0481 from Prochlorococcus marinus subsp. pastoris (strain CCMP1986 / NIES-2087 / MED4).